Consider the following 1131-residue polypeptide: DNA polymerase II large subunit (1131 aa).

This sequence belongs to the archaeal DNA polymerase II family. As to quaternary structure, heterodimer of a large subunit and a small subunit.

It catalyses the reaction DNA(n) + a 2'-deoxyribonucleoside 5'-triphosphate = DNA(n+1) + diphosphate. The catalysed reaction is Exonucleolytic cleavage in the 3'- to 5'-direction to yield nucleoside 5'-phosphates.. Functionally, possesses two activities: a DNA synthesis (polymerase) and an exonucleolytic activity that degrades single-stranded DNA in the 3'- to 5'-direction. Has a template-primer preference which is characteristic of a replicative DNA polymerase. This chain is DNA polymerase II large subunit, found in Methanococcus maripaludis (strain C5 / ATCC BAA-1333).